A 392-amino-acid polypeptide reads, in one-letter code: MLKLFKRIGRKKDSKIEDFYEFGPEIGRGAFSIVRQGTHKDTGDQVAIKAISKQHVSEADMKRFTREIEIMKKLKHKNIIQLIEVFDSNDYLYLVLELIRGGELFDKIVEKGNYSEKDACNLVRQIVSAVEYMHQHGVCHRDLKPENLLCSGDDEKEEIVRIADFGLSKIFEGGEELKTACGTPDYVAPEILECKPYDTSVDMWSIGVITYILLCGFAPFYADTHHELFQKILDLEYDFPEPEWNGITDLAKDFISQLLIINPEERWTASQCIKHPWLAENHGDKELKSLDSAISSMKDYVRNREASTSNILKMRASQSTPNLHSANSNTNTNSLSSSNSNNTTSNSNNNNNNNSNNSNNNNNNSNNNNNINNNNNNNNNNNNNNNNNNNNI.

In terms of domain architecture, Protein kinase spans 20–278; that stretch reads YEFGPEIGRG…ASQCIKHPWL (259 aa). ATP is bound by residues 26–34 and Lys-49; that span reads IGRGAFSIV. Asp-142 (proton acceptor) is an active-site residue. A compositionally biased stretch (polar residues) spans 317–326; the sequence is SQSTPNLHSA. A disordered region spans residues 317 to 392; it reads SQSTPNLHSA…NNNNNNNNNI (76 aa). Residues 327 to 392 are compositionally biased toward low complexity; it reads NSNTNTNSLS…NNNNNNNNNI (66 aa).

It belongs to the protein kinase superfamily. CAMK Ser/Thr protein kinase family. CaMK subfamily.

It catalyses the reaction L-seryl-[myosin light chain] + ATP = O-phospho-L-seryl-[myosin light chain] + ADP + H(+). It carries out the reaction L-threonyl-[myosin light chain] + ATP = O-phospho-L-threonyl-[myosin light chain] + ADP + H(+). May phosphorylate a specific serine in the N-terminus of a myosin light chain. In Dictyostelium discoideum (Social amoeba), this protein is Probable myosin light chain kinase DDB_G0271550.